Reading from the N-terminus, the 550-residue chain is Acetyl-coenzyme A transporter 1 (550 aa).

The Cytoplasmic segment spans residues 1 to 74; sequence MSPTISHKDN…KRSYRAELSS (74 aa). At Ser-42 the chain carries Phosphoserine. Residues 75–95 traverse the membrane as a helical segment; sequence ILLLLFLYVLQGIPLGLAGSI. Topologically, residues 96–113 are extracellular; the sequence is PLILQSKNVSYTDQAFFS. Asn-103 carries N-linked (GlcNAc...) asparagine glycosylation. The chain crosses the membrane as a helical span at residues 114 to 134; the sequence is FVFWPFSLKLLWAPLVDAVYF. Over 135-141 the chain is Cytoplasmic; it reads KNFGRRK. Residues 142 to 162 traverse the membrane as a helical segment; that stretch reads SWLVPTQYILGIFMIYLSTQV. Residues 163–256 are Extracellular-facing; sequence DRLLGNIDGR…FQPQPRGIVT (94 aa). Residues 257 to 277 form a helical membrane-spanning segment; that stretch reads LSDFLFFWGTVFLITTTLVAL. Over 278-300 the chain is Cytoplasmic; that stretch reads LKKETREASVVKEETQGITDTYK. A helical membrane pass occupies residues 301–321; the sequence is LLFSIIKMPAVLAFCLLILTS. The Extracellular portion of the chain corresponds to 322-344; that stretch reads KIGFSAADAVTGLKLVEEGVPKE. A helical membrane pass occupies residues 345-365; the sequence is HLALLAVPMVPLQIILPLLIS. The Cytoplasmic segment spans residues 366–375; the sequence is KYTAGPQPLN. A helical membrane pass occupies residues 376–396; it reads IFYKAMPYRLLLGLEYALLVW. At 397 to 405 the chain is on the extracellular side; it reads WTPKVEHQG. A helical transmembrane segment spans residues 406 to 426; that stretch reads GFPIYYYIIVLLSYALHQVTL. The Cytoplasmic portion of the chain corresponds to 427-509; it reads YSMYVSIMAF…LGGSCVTALD (83 aa). Residues 510–530 form a helical membrane-spanning segment; the sequence is GYYVESIVCVLIGFGWWFFLG. At 531-550 the chain is on the extracellular side; sequence PKFKKLQDEGPSSWKCKRTN.

This sequence belongs to the SLC33A transporter family. In terms of assembly, homodimerizes. In terms of tissue distribution, expressed in brain at all developmental stages. Detected in hippocampus, hypothalamus, cerebellum, cortex, olfactory bulb, and the ventral and dorsal anterior olfactory nucleus.

The protein localises to the endoplasmic reticulum membrane. The enzyme catalyses acetyl-CoA(in) = acetyl-CoA(out). Functionally, acetyl-CoA transporter that mediates active acetyl-CoA import through the endoplasmic reticulum (ER) membrane into the ER lumen where specific ER-based acetyl-CoA:lysine acetyltransferases are responsible for the acetylation of ER-based protein substrates, such as BACE1. Necessary for O-acetylation of gangliosides. The sequence is that of Acetyl-coenzyme A transporter 1 (Slc33a1) from Rattus norvegicus (Rat).